Consider the following 580-residue polypeptide: DBIRD complex subunit ZNF326 (580 aa).

Residues 1–124 (MDFEDDYVHS…YRNSLDSFGG (124 aa)) are mediates transcriptional activation. Phosphoserine is present on residues Ser-48, Ser-56, Ser-63, Ser-69, Ser-81, Ser-82, Ser-91, Ser-106, Ser-114, Ser-118, Ser-121, and Ser-137. Lys-140 participates in a covalent cross-link: Glycyl lysine isopeptide (Lys-Gly) (interchain with G-Cter in SUMO2). The interval 156–196 (SYSSFSSPHMKPAPVGSRGRGTPAYPESTFGSRSYDAFGGP) is disordered. An Omega-N-methylarginine modification is found at Arg-173. Ser-212 carries the phosphoserine modification. Arg-235 is modified (omega-N-methylarginine). The Bipartite nuclear localization signal motif lies at 238 to 260 (KRKMMQIFIKPGGAFIKKPKLAK). Lys-240 is covalently cross-linked (Glycyl lysine isopeptide (Lys-Gly) (interchain with G-Cter in SUMO2)). Lys-247 carries the N6-acetyllysine; alternate modification. A Glycyl lysine isopeptide (Lys-Gly) (interchain with G-Cter in SUMO2); alternate cross-link involves residue Lys-247. Residues Lys-254 and Lys-264 each participate in a glycyl lysine isopeptide (Lys-Gly) (interchain with G-Cter in SUMO2) cross-link. Positions 256 to 302 (PKLAKPMDKMNLSKSPTKTDPKNEEEEKRRIEARREKQRRRREKNSE) are disordered. Residue Ser-270 is modified to Phosphoserine. Residues 272-290 (TKTDPKNEEEEKRRIEARR) show a composition bias toward basic and acidic residues. The segment at 314–336 (CSFCKFRTFEEKDIELHLESSSH) adopts a C2H2 AKAP95-type 1 zinc-finger fold. Residue Lys-401 forms a Glycyl lysine isopeptide (Lys-Gly) (interchain with G-Cter in SUMO2) linkage. The C2H2 AKAP95-type 2 zinc finger occupies 407 to 430 (CSACSVYIPALHSSVQLHLKSPDH). Glycyl lysine isopeptide (Lys-Gly) (interchain with G-Cter in SUMO2) cross-links involve residues Lys-459 and Lys-467. The interval 470–580 (NPFEIQDHPQ…ATEQCEHRQM (111 aa)) is disordered. Residues 483-529 (IEGDEEDEEKIDEPIEEEEEEEEEEEEEGEEAGSVEEEGDVEGEEGT) show a composition bias toward acidic residues. Over residues 530–539 (AEAAAAGEAD) the composition is skewed to low complexity. Residues 540-562 (AVGEAEGAGEAEEAEEEEEEEGT) show a composition bias toward acidic residues.

It belongs to the AKAP95 family. As to quaternary structure, component of the DBIRD complex. Interacts with CCAR2; the interaction is direct. As to expression, ubiquitously expressed in adult tissues. Highly expressed in neuronal tissues such as brain and neural tube.

The protein localises to the nucleus matrix. Functionally, core component of the DBIRD complex, a multiprotein complex that acts at the interface between core mRNP particles and RNA polymerase II (RNAPII) and integrates transcript elongation with the regulation of alternative splicing: the DBIRD complex affects local transcript elongation rates and alternative splicing of a large set of exons embedded in (A + T)-rich DNA regions. May also play a role in neuronal differentiation. Able to bind DNA and activate expression in vitro. The protein is DBIRD complex subunit ZNF326 (Znf326) of Mus musculus (Mouse).